Here is a 344-residue protein sequence, read N- to C-terminus: Arginine N-succinyltransferase (344 aa).

Residue L125 participates in succinyl-CoA binding. Residue H229 is the Proton donor of the active site.

This sequence belongs to the arginine N-succinyltransferase family.

It catalyses the reaction succinyl-CoA + L-arginine = N(2)-succinyl-L-arginine + CoA + H(+). Its pathway is amino-acid degradation; L-arginine degradation via AST pathway; L-glutamate and succinate from L-arginine: step 1/5. Catalyzes the transfer of succinyl-CoA to arginine to produce N(2)-succinylarginine. This chain is Arginine N-succinyltransferase, found in Shigella dysenteriae serotype 1 (strain Sd197).